Consider the following 171-residue polypeptide: Large ribosomal subunit protein bL9 (171 aa).

It belongs to the bacterial ribosomal protein bL9 family.

Its function is as follows. Binds to the 23S rRNA. The polypeptide is Large ribosomal subunit protein bL9 (Rickettsia canadensis (strain McKiel)).